A 586-amino-acid polypeptide reads, in one-letter code: uncharacterized protein (586 aa).

2 coiled-coil regions span residues 183-293 (THTE…ELEN) and 331-400 (FKDK…DKKN).

This is an uncharacterized protein from Bacillus subtilis (strain 168).